The sequence spans 353 residues: Photosystem II protein D1 (353 aa).

T2 is modified (N-acetylthreonine). Phosphothreonine is present on T2. Helical transmembrane passes span 29-46 (YIGW…TATS), 118-133 (HFLL…EWEL), and 142-156 (WIAV…AATA). H118 provides a ligand contact to chlorophyll a. Y126 contributes to the pheophytin a binding site. [CaMn4O5] cluster is bound by residues D170 and E189. The helical transmembrane segment at 197-218 (FHMLGVAGVFGGSLFSAMHGSL) threads the bilayer. H198 lines the chlorophyll a pocket. Residues H215 and 264-265 (SF) contribute to the a quinone site. H215 serves as a coordination point for Fe cation. H272 contributes to the Fe cation binding site. The chain crosses the membrane as a helical span at residues 274 to 288 (FLAAWPVVGIWFTAL). [CaMn4O5] cluster contacts are provided by H332, E333, D342, and A344. Residues 345 to 353 (AVESPSING) constitute a propeptide that is removed on maturation.

Belongs to the reaction center PufL/M/PsbA/D family. As to quaternary structure, PSII is composed of 1 copy each of membrane proteins PsbA, PsbB, PsbC, PsbD, PsbE, PsbF, PsbH, PsbI, PsbJ, PsbK, PsbL, PsbM, PsbT, PsbX, PsbY, PsbZ, Psb30/Ycf12, at least 3 peripheral proteins of the oxygen-evolving complex and a large number of cofactors. It forms dimeric complexes. The cofactor is The D1/D2 heterodimer binds P680, chlorophylls that are the primary electron donor of PSII, and subsequent electron acceptors. It shares a non-heme iron and each subunit binds pheophytin, quinone, additional chlorophylls, carotenoids and lipids. D1 provides most of the ligands for the Mn4-Ca-O5 cluster of the oxygen-evolving complex (OEC). There is also a Cl(-1) ion associated with D1 and D2, which is required for oxygen evolution. The PSII complex binds additional chlorophylls, carotenoids and specific lipids.. Post-translationally, tyr-161 forms a radical intermediate that is referred to as redox-active TyrZ, YZ or Y-Z. In terms of processing, C-terminally processed by CTPA; processing is essential to allow assembly of the oxygen-evolving complex and thus photosynthetic growth.

The protein localises to the plastid. Its subcellular location is the chloroplast thylakoid membrane. The catalysed reaction is 2 a plastoquinone + 4 hnu + 2 H2O = 2 a plastoquinol + O2. Functionally, photosystem II (PSII) is a light-driven water:plastoquinone oxidoreductase that uses light energy to abstract electrons from H(2)O, generating O(2) and a proton gradient subsequently used for ATP formation. It consists of a core antenna complex that captures photons, and an electron transfer chain that converts photonic excitation into a charge separation. The D1/D2 (PsbA/PsbD) reaction center heterodimer binds P680, the primary electron donor of PSII as well as several subsequent electron acceptors. The polypeptide is Photosystem II protein D1 (Sinapis alba (White mustard)).